A 406-amino-acid polypeptide reads, in one-letter code: Cysteine desulfurase (406 aa).

Lys226 is subject to N6-(pyridoxal phosphate)lysine. The active-site Cysteine persulfide intermediate is Cys364.

Belongs to the class-V pyridoxal-phosphate-dependent aminotransferase family. Csd subfamily. In terms of assembly, homodimer. Interacts with SufE and the SufBCD complex composed of SufB, SufC and SufD. The interaction with SufE is required to mediate the direct transfer of the sulfur atom from the S-sulfanylcysteine. Pyridoxal 5'-phosphate is required as a cofactor.

The protein localises to the cytoplasm. The catalysed reaction is (sulfur carrier)-H + L-cysteine = (sulfur carrier)-SH + L-alanine. It catalyses the reaction L-selenocysteine + AH2 = hydrogenselenide + L-alanine + A + H(+). The protein operates within cofactor biosynthesis; iron-sulfur cluster biosynthesis. Cysteine desulfurases mobilize the sulfur from L-cysteine to yield L-alanine, an essential step in sulfur metabolism for biosynthesis of a variety of sulfur-containing biomolecules. Component of the suf operon, which is activated and required under specific conditions such as oxidative stress and iron limitation. Acts as a potent selenocysteine lyase in vitro, that mobilizes selenium from L-selenocysteine. Selenocysteine lyase activity is however unsure in vivo. The chain is Cysteine desulfurase from Yersinia pestis bv. Antiqua (strain Angola).